The sequence spans 147 residues: Hemoglobin subunit beta-1 (147 aa).

Positions 3-147 (HWTDFERSTI…VVFSLGKQYH (145 aa)) constitute a Globin domain. Residues H64 and H93 each contribute to the heme b site.

It belongs to the globin family. As to quaternary structure, hb1 is a heterotetramer of two alpha-1 chains and two beta-1 chains. Red blood cells.

Functionally, involved in oxygen transport from gills to the various peripheral tissues. This chain is Hemoglobin subunit beta-1, found in Liparis tunicatus (Kelp snailfish).